The chain runs to 273 residues: Formamidopyrimidine-DNA glycosylase (273 aa).

Pro2 acts as the Schiff-base intermediate with DNA in catalysis. The active-site Proton donor is the Glu3. The active-site Proton donor; for beta-elimination activity is the Lys58. DNA is bound by residues His91, Arg110, and Arg153. An FPG-type zinc finger spans residues 238 to 272 (KVYGKEGQPCPRCGEDFVKIKISGRGTTYCLHCQK). The Proton donor; for delta-elimination activity role is filled by Arg262.

This sequence belongs to the FPG family. As to quaternary structure, monomer. Requires Zn(2+) as cofactor.

It carries out the reaction Hydrolysis of DNA containing ring-opened 7-methylguanine residues, releasing 2,6-diamino-4-hydroxy-5-(N-methyl)formamidopyrimidine.. It catalyses the reaction 2'-deoxyribonucleotide-(2'-deoxyribose 5'-phosphate)-2'-deoxyribonucleotide-DNA = a 3'-end 2'-deoxyribonucleotide-(2,3-dehydro-2,3-deoxyribose 5'-phosphate)-DNA + a 5'-end 5'-phospho-2'-deoxyribonucleoside-DNA + H(+). Its function is as follows. Involved in base excision repair of DNA damaged by oxidation or by mutagenic agents. Acts as a DNA glycosylase that recognizes and removes damaged bases. Has a preference for oxidized purines, such as 7,8-dihydro-8-oxoguanine (8-oxoG). Has AP (apurinic/apyrimidinic) lyase activity and introduces nicks in the DNA strand. Cleaves the DNA backbone by beta-delta elimination to generate a single-strand break at the site of the removed base with both 3'- and 5'-phosphates. This Lactobacillus delbrueckii subsp. bulgaricus (strain ATCC 11842 / DSM 20081 / BCRC 10696 / JCM 1002 / NBRC 13953 / NCIMB 11778 / NCTC 12712 / WDCM 00102 / Lb 14) protein is Formamidopyrimidine-DNA glycosylase.